The sequence spans 239 residues: Ribonuclease 3 (239 aa).

The RNase III domain maps to 18–141 (YTTLEKALGY…LMAGVYLEAG (124 aa)). E54 contributes to the Mg(2+) binding site. Residue D58 is part of the active site. Residues S127 and E130 each coordinate Mg(2+). E130 is a catalytic residue. The region spanning 168–237 (DYKTALQELT…AYQALQKLKE (70 aa)) is the DRBM domain.

Belongs to the ribonuclease III family. As to quaternary structure, homodimer. Mg(2+) serves as cofactor.

The protein localises to the cytoplasm. It catalyses the reaction Endonucleolytic cleavage to 5'-phosphomonoester.. Functionally, digests double-stranded RNA. Involved in the processing of primary rRNA transcript to yield the immediate precursors to the large and small rRNAs (23S and 16S). Processes some mRNAs, and tRNAs when they are encoded in the rRNA operon. Processes pre-crRNA and tracrRNA of type II CRISPR loci if present in the organism. The polypeptide is Ribonuclease 3 (Helicobacter pylori (strain ATCC 700392 / 26695) (Campylobacter pylori)).